Reading from the N-terminus, the 116-residue chain is Large ribosomal subunit protein bL19 (116 aa).

This sequence belongs to the bacterial ribosomal protein bL19 family.

Functionally, this protein is located at the 30S-50S ribosomal subunit interface and may play a role in the structure and function of the aminoacyl-tRNA binding site. In Haemophilus influenzae (strain 86-028NP), this protein is Large ribosomal subunit protein bL19.